The primary structure comprises 99 residues: DNA-binding protein Fis (99 aa).

Residues 75 to 94 (QTRAAIMMGINRGTLRKKLK) constitute a DNA-binding region (H-T-H motif).

Belongs to the transcriptional regulatory Fis family. Homodimer.

Activates ribosomal RNA transcription. Plays a direct role in upstream activation of rRNA promoters. The protein is DNA-binding protein Fis of Tolumonas auensis (strain DSM 9187 / NBRC 110442 / TA 4).